Consider the following 357-residue polypeptide: Olfactory receptor 2B2 (357 aa).

Topologically, residues 1–25 (MNWVNKSVPQEFILLVFSDQPWLEI) are extracellular. N-linked (GlcNAc...) asparagine glycosylation is present at asparagine 5. Residues 26-49 (PPFVMFLFSYILTIFGNLTIILVS) form a helical membrane-spanning segment. Over 50–57 (HVDFKLHT) the chain is Cytoplasmic. A helical membrane pass occupies residues 58–79 (PMYFFLSNLSLLDLCYTTSTVP). Residues 80–100 (QMLVNICNTRKVISYGGCVAQ) are Extracellular-facing. An intrachain disulfide couples cysteine 97 to cysteine 189. The helical transmembrane segment at 101-120 (LFIFLALGSTECLLLAVMCF) threads the bilayer. The Cytoplasmic portion of the chain corresponds to 121-139 (DRFVAICRPLHYSIIMHQR). A helical membrane pass occupies residues 140–158 (LCFQLAAASWISGFSNSVL). At 159–195 (QSTWTLKMPLCGHKEVDHFFCEVPALLKLSCVDTTAN) the chain is on the extracellular side. The chain crosses the membrane as a helical span at residues 196–219 (EAELFFISVLFLLIPVTLILISYA). Residues 220-236 (FIVQAVLRIQSAEGQRK) lie on the Cytoplasmic side of the membrane. Residues 237–259 (AFGTCGSHLIVVSLFYGTAISMY) form a helical membrane-spanning segment. Over 260–272 (LQPPSPSSKDRGK) the chain is Extracellular. The chain crosses the membrane as a helical span at residues 273-292 (MVSLFCGIIAPMLNPLIYTL). Residues 293-357 (RNKEVKEAFK…YCNLPQRKFP (65 aa)) lie on the Cytoplasmic side of the membrane.

Belongs to the G-protein coupled receptor 1 family.

Its subcellular location is the cell membrane. Functionally, odorant receptor. The chain is Olfactory receptor 2B2 (OR2B2) from Homo sapiens (Human).